The chain runs to 944 residues: Protein translocase subunit SecA (944 aa).

Residues Gln77, 95-99 (GEGKT), and Asp484 each bind ATP. A disordered region spans residues 920–944 (EQEKQTRKKKKKKPHEDESSKTKIG). Positions 933 to 944 (PHEDESSKTKIG) are enriched in basic and acidic residues.

It belongs to the SecA family. As to quaternary structure, monomer and homodimer. Part of the essential Sec protein translocation apparatus which comprises SecA, SecYEG and auxiliary proteins SecDF. Other proteins may also be involved.

Its subcellular location is the cell membrane. The protein resides in the cytoplasm. It carries out the reaction ATP + H2O + cellular proteinSide 1 = ADP + phosphate + cellular proteinSide 2.. In terms of biological role, part of the Sec protein translocase complex. Interacts with the SecYEG preprotein conducting channel. Has a central role in coupling the hydrolysis of ATP to the transfer of proteins into and across the cell membrane, serving as an ATP-driven molecular motor driving the stepwise translocation of polypeptide chains across the membrane. This Mycoplasma mycoides subsp. mycoides SC (strain CCUG 32753 / NCTC 10114 / PG1) protein is Protein translocase subunit SecA.